The sequence spans 570 residues: Guanine nucleotide-binding protein alpha-3 subunit (570 aa).

The PH domain occupies arginine 10–glutamate 113. In terms of domain architecture, G-alpha spans proline 144–cysteine 570. The segment at lysine 147–threonine 160 is G1 motif. Glycine 152–serine 159 contacts GTP. Serine 159 contacts Mg(2+). 2 stretches are compositionally biased toward low complexity: residues asparagine 254 to serine 272 and asparagine 290 to serine 316. The disordered stretch occupies residues asparagine 254–asparagine 321. A G2 motif region spans residues aspartate 386–threonine 394. GTP contacts are provided by residues leucine 388 to threonine 394, aspartate 414 to glutamine 418, asparagine 483 to aspartate 486, and alanine 544. Position 394 (threonine 394) interacts with Mg(2+). The G3 motif stretch occupies residues phenylalanine 410 to arginine 419. The segment at isoleucine 479–aspartate 486 is G4 motif. The segment at threonine 542–threonine 547 is G5 motif.

Belongs to the G-alpha family. In terms of assembly, g proteins are composed of 3 units; alpha, beta and gamma. The alpha chain contains the guanine nucleotide binding site.

In terms of biological role, guanine nucleotide-binding proteins (G proteins) are involved as modulators or transducers in various transmembrane signaling systems. G alpha-3 plays a role in development. G alpha-3 mutants fail to aggregate. The protein is Guanine nucleotide-binding protein alpha-3 subunit (gpaC) of Dictyostelium discoideum (Social amoeba).